The primary structure comprises 360 residues: MTELDTLKSQLMSEIAAAADEPAIEAVRVSALGKKGSVSELLKTLGSMTPEERQTRGAAINQLKTEITDLIGERKNALKDAAIAARLKAETVDVSLPVRQSPTERGRIHPISQIVDEITAIFADMGFSIAEGPDIETDYYNFTALNFPEGHPAREMHDTFFFQPDEKGERKVLRTHTSPVQIRTMESQKPPIRIVIPGKTYRQDSDATHSPMFHQVEGLVIDKKAHVGNLRWVLEEFCKTFFEVDSVVMRFRPSFFPFTEPSFEVDIQCDRSGPIVKFGEGKDWMEILGCGMVHPNVLRAGGLDPDEYQGFAWGMGLDRIAMLKYGMPDLRDFFNADVRWMNHYGFRPLDMPTLFGGLSV.

Glutamate 260 lines the Mg(2+) pocket.

It belongs to the class-II aminoacyl-tRNA synthetase family. Phe-tRNA synthetase alpha subunit type 1 subfamily. As to quaternary structure, tetramer of two alpha and two beta subunits. The cofactor is Mg(2+).

It is found in the cytoplasm. It catalyses the reaction tRNA(Phe) + L-phenylalanine + ATP = L-phenylalanyl-tRNA(Phe) + AMP + diphosphate + H(+). The sequence is that of Phenylalanine--tRNA ligase alpha subunit from Agrobacterium fabrum (strain C58 / ATCC 33970) (Agrobacterium tumefaciens (strain C58)).